The chain runs to 505 residues: Protein disulfide-isomerase A3 (505 aa).

The first 24 residues, methionine 1–alanine 24, serve as a signal peptide directing secretion. Positions serine 25–glycine 133 constitute a Thioredoxin 1 domain. Catalysis depends on nucleophile residues cysteine 57 and cysteine 60. A disulfide bridge connects residues cysteine 57 and cysteine 60. N6-methyllysine is present on lysine 61. The cysteines at positions 85 and 92 are disulfide-linked. Lysine 129 is modified (N6-succinyllysine). Position 152 is an N6-acetyllysine (lysine 152). Lysine 218 carries the post-translational modification N6-succinyllysine. Lysine 252 is modified (N6-acetyllysine). At threonine 319 the chain carries Phosphothreonine. The region spanning serine 343 to threonine 485 is the Thioredoxin 2 domain. Lysine 362 is modified (N6-acetyllysine). Active-site nucleophile residues include cysteine 406 and cysteine 409. Cysteine 406 and cysteine 409 are oxidised to a cystine. The tract at residues alanine 484 to leucine 505 is disordered. Residues glutamine 491–leucine 505 show a composition bias toward basic and acidic residues. Lysine 494 is subject to N6-acetyllysine. The Prevents secretion from ER motif lies at glutamine 502–leucine 505.

Part of the major histocompatibility complex class I (MHC I) peptide loading complex composed of TAP1, TAP2, B2M, MHC heavy chain, TAPBP, PDIA3, and CALR. Interacts with ERP27 and CANX. Interacts with SERPINA2 and with the S and Z variants of SERPINA1. Interacts with ATP2A2. Within the major histocompatibility complex class I (MHC I) peptide loading complex forms reversible disulfide-linked heterodimers with TAPBP as part of its protein folding chaperone activity. This is essential to assist the dynamic assembly of the MHC I complex with high affinity antigens in the endoplasmic reticulum. Post-translationally, phosphorylated. In terms of tissue distribution, detected in the flagellum and head region of spermatozoa (at protein level). Expressed in liver, stomach and colon (at protein level). Expressed in gastric parietal cells and chief cells (at protein level).

The protein localises to the endoplasmic reticulum. Its subcellular location is the endoplasmic reticulum lumen. It localises to the melanosome. The enzyme catalyses Catalyzes the rearrangement of -S-S- bonds in proteins.. Its activity is regulated as follows. Association with calcitriol does not affect its enzymatic activity. Functionally, protein disulfide isomerase that catalyzes the formation, isomerization, and reduction or oxidation of disulfide bonds in client proteins and functions as a protein folding chaperone. Core component of the major histocompatibility complex class I (MHC I) peptide loading complex where it functions as an essential folding chaperone for TAPBP. Through TAPBP, assists the dynamic assembly of the MHC I complex with high affinity antigens in the endoplasmic reticulum. Therefore, plays a crucial role in the presentation of antigens to cytotoxic T cells in adaptive immunity. This is Protein disulfide-isomerase A3 from Homo sapiens (Human).